Consider the following 1069-residue polypeptide: MPTAGSKKKAPTPQISCLTSESYTQLDFLPDKLRTKLLPFQKDGIVFALRRDGRCMVADEMGLGKTIQAIAIAYFYKEEWPLLIVVPSSLRYPWIEELEKWIPELEPEEINVVMNKTDIGRIPGSRVTVLGYGLLTTDAETLLDALNTQNFRVVIVDESHYMKSRTAARSKILLPMVQKARRAILLTGTPALGRPEELFMQIEALFPQKFGTWIEYAKRYCNAHVRYFGKRRQWDCRGASNLSELHQLLNDIMIRRLKSEVLSQLPPKVRQRIPFDLPPAAVKELNASFEEWQKLMRAPNSGAMETVMGLITRMFKQTAIAKAGAVKDYIKMLLQNDSLKFLVFAHHLSMLQACTEAVIESKSRYIRIDGSVPSSERIHLVNQFQKDPDTRVAILSIQAAGQGLTFTAASHVVFAELYWDPGHIKQAEDRAHRIGQCSSVNIHYLIANGTLDSLMWAMLNRKAQVTGSTLNGRKEKLQATEDDKEKWGFLQFAEAWTPSDSFEELKDSVFTHFEKEKQHDIRSFFLPKLKKRQLETTCDDPEAFKEKITVASDPRKMATSDSTADKNGCEPEAKRLKSLSTEDHSSALEEGPSLQARATSMEVVHEVKPPLASPALPEKGWQCGFCTFLNNPGLPYCEMCENPRSRAAGRNHLQDNNKNDEDAAQESTSKSDQAGLECERQCPERLEAEQSANSKEEALEGGGEDRLPSQPEIGQLNNSGTLPVRETFMFCASRNTDRIHLYTKDGKPMNCNFIPLDIKLDLWEDLPATFQLKQNRSLILRFVREWSSLTAMKQRVLRKSGQLFCSPLLASEEITKQQAKENNTRRYITKEDVAKASMNKVKSDGGHIRLITKESMTQDSSLKKIDSACVPSLNPCPADLTVEPSPSKGYIQAVDKEGRPLCLRCQHPTCQPEQTAKASAWDSRFCSLKCQEEFWIRSNNSYLRAQVFATEHGVCQHCGVDAQELFLRMRDAPKSHRKSLLNAAWTAKLPLEQLNEMLRNPGEGHFWQVDHIRPVYEGGGQCSLDNLQTLCTVCHKERTAQQAKERSQVRRLSLATKHGSDITRFLVKK.

A Helicase ATP-binding domain is found at 46-208; sequence VFALRRDGRC…FMQIEALFPQ (163 aa). The segment at 46-481 is DNA annealing helicase activity; sequence VFALRRDGRC…GRKEKLQATE (436 aa). An ATP-binding site is contributed by 59-66; it reads DEMGLGKT. A DEAH box motif is present at residues 157–160; that stretch reads DESH. One can recognise a Helicase C-terminal domain in the interval 325–485; the sequence is AVKDYIKMLL…KLQATEDDKE (161 aa). The PIP-box motif lies at 518-525; sequence QHDIRSFF. Residues 617–646 form a RanBP2-type zinc finger; sequence PEKGWQCGFCTFLNNPGLPYCEMCENPRSR. The tract at residues 648 to 720 is disordered; the sequence is AGRNHLQDNN…PEIGQLNNSG (73 aa). Basic and acidic residues-rich tracts occupy residues 652–661 and 677–707; these read HLQDNNKNDE and ECERQCPERLEAEQSANSKEEALEGGGEDRL. The HNH domain maps to 1001–1041; it reads PGEGHFWQVDHIRPVYEGGGQCSLDNLQTLCTVCHKERTAQ. Positions 1001 to 1069 are endonuclease activity; sequence PGEGHFWQVD…SDITRFLVKK (69 aa). Residues 1064 to 1068 carry the APIM motif motif; it reads RFLVK.

This sequence belongs to the SNF2/RAD54 helicase family. In terms of assembly, interacts (via PIP-box and RanBP2-type zinc finger) with PCNA (when PCNA is polyubiquitinated via 'Lys-63'-linked polyubiquitin).

The protein resides in the nucleus. Its subcellular location is the chromosome. DNA annealing helicase and endonuclease required to maintain genome stability at stalled or collapsed replication forks by facilitating fork restart and limiting inappropriate recombination that could occur during template switching events. Recruited to the sites of stalled DNA replication by polyubiquitinated PCNA and acts as a structure-specific endonuclease that cleaves the replication fork D-loop intermediate, generating an accessible 3'-OH group in the template of the leading strand, which is amenable to extension by DNA polymerase. In addition to endonuclease activity, also catalyzes the fork regression via annealing helicase activity in order to prevent disintegration of the replication fork and the formation of double-strand breaks. The polypeptide is DNA annealing helicase and endonuclease ZRANB3 (Zranb3) (Mus musculus (Mouse)).